The following is a 693-amino-acid chain: MAKLREASFCALACVLVLFLSFVSADTYNRQDKQVYVVYMGSLPSQPDYKPTSDHISILQQVTGESSMEGRLVRSYKKSFNGFSARLTESERKRVAEMEGVVSVFPSKKYKLHTTASWDFMGLKEGKNTKRNLAVESDTIVGVFDTGISPESESFSGKGFGPPPKKWKGVCKGGKNFTCNNKLIGARDYTNEGTRDIEGHGTHTASTAAGNVVENTSFYGIGNGTARGGVPDSRIAAYKVCSGAGCSSEYILSAFDDAIADGVDVISASLGGDTAYMYEKDPIAIGAFHAMAKGILTVQSAGNNGPNPTVSVAPWILTVAASTTNRRIVTKVVLGNGKTLVGQSVNAFDLKGKQYPLVYETSVEKCNNESLTTLALSFLTLTPQSNEQIISMFHTLIMWSPKATILKSEAIFNQTDPKVAGFSSRGPNTIAVDILKPDITAPGVEILAAYSPLVSPSATTLDNRRVNYTITSGTSMACPHVSGVAAYIKTFHPEWYPSMIQSAIMTTAWPMNPSGTDAVSTEFAYGSGHIDPIAAINPGLVYELGKSDHIAFLCGLNYNATTLKLIAGEAVTCTGKTLPRNLNYPSMSAKLSKSKSSFTVTFNRTVTNVGTSNSTYKSKVVINHGSKLKVKVSPSVLSMKSVNEKQSFTVSVSGNDLNPKLPSSANLIWSDGTHNVRSPIVVYTDYASSVDIF.

The N-terminal stretch at 1–25 (MAKLREASFCALACVLVLFLSFVSA) is a signal peptide. The propeptide at 26 to 113 (DTYNRQDKQV…VFPSKKYKLH (88 aa)) is activation peptide. The Inhibitor I9 domain occupies 35–113 (VYVVYMGSLP…VFPSKKYKLH (79 aa)). The Peptidase S8 domain occupies 117–536 (SWDFMGLKEG…SGHIDPIAAI (420 aa)). D145 (charge relay system) is an active-site residue. Residue N176 is glycosylated (N-linked (GlcNAc...) asparagine). H200 serves as the catalytic Charge relay system. N215, N223, N368, N413, and N467 each carry an N-linked (GlcNAc...) asparagine glycan. Residues 354–396 (QYPLVYETSVEKCNNESLTTLALSFLTLTPQSNEQIISMFHTL) form the PA domain. Catalysis depends on S475, which acts as the Charge relay system. Residues N559, N603, and N613 are each glycosylated (N-linked (GlcNAc...) asparagine).

The protein belongs to the peptidase S8 family. The C-terminal propeptide is autocleaved.

Its subcellular location is the secreted. This Arabidopsis thaliana (Mouse-ear cress) protein is Subtilisin-like protease SBT4.10.